A 321-amino-acid chain; its full sequence is Homoserine O-succinyltransferase (321 aa).

Residue C142 is the Acyl-thioester intermediate of the active site. 2 residues coordinate substrate: K163 and S192. Catalysis depends on H235, which acts as the Proton acceptor. E237 is a catalytic residue. R249 contacts substrate.

Belongs to the MetA family.

The protein localises to the cytoplasm. It catalyses the reaction L-homoserine + succinyl-CoA = O-succinyl-L-homoserine + CoA. The protein operates within amino-acid biosynthesis; L-methionine biosynthesis via de novo pathway; O-succinyl-L-homoserine from L-homoserine: step 1/1. Functionally, transfers a succinyl group from succinyl-CoA to L-homoserine, forming succinyl-L-homoserine. This Shewanella loihica (strain ATCC BAA-1088 / PV-4) protein is Homoserine O-succinyltransferase.